The following is a 125-amino-acid chain: Cystatin-like cysteine protease inhibitor EPIC2A (125 aa).

A signal peptide spans 1 to 21 (MSFLRPTLALLAVTALVTTSA). N45 is a glycosylation site (N-linked (GlcNAc...) asparagine). Residues 68-72 (QVVSG) carry the Secondary area of contact motif.

It belongs to the cystatin family.

The protein resides in the secreted. Functionally, secreted effector that interacts with and inhibits host apoplastic pathogenesis-related papain-like cysteine proteases. Inhibition of host proteases by a pathogen extracellular protease inhibitor forms a specific type of defense-counterdefense mechanism between plants and microbial pathogens. The sequence is that of Cystatin-like cysteine protease inhibitor EPIC2A from Phytophthora infestans (strain T30-4) (Potato late blight agent).